A 284-amino-acid polypeptide reads, in one-letter code: Small ribosomal subunit protein uS5y/uS5u/uS5v (284 aa).

Basic and acidic residues predominate over residues 1–19; that stretch reads MAERGGESGAERGGDRGDF. Residues 1-51 are disordered; that stretch reads MAERGGESGAERGGDRGDFGRGFGGGRGGGRGRDRGPRGRGRRGGRASEET. Residues 20 to 29 show a composition bias toward gly residues; the sequence is GRGFGGGRGG. The 64-residue stretch at 95–158 folds into the S5 DRBM domain; that stretch reads LKDEVMKIMP…ILAKLSVVPV (64 aa).

It belongs to the universal ribosomal protein uS5 family.

This chain is Small ribosomal subunit protein uS5y/uS5u/uS5v (RPS2B), found in Arabidopsis thaliana (Mouse-ear cress).